Here is a 270-residue protein sequence, read N- to C-terminus: Putative pyruvate, phosphate dikinase regulatory protein (270 aa).

ADP is bound at residue 151–158 (GVSRTSKT).

The protein belongs to the pyruvate, phosphate/water dikinase regulatory protein family. PDRP subfamily.

The catalysed reaction is N(tele)-phospho-L-histidyl/L-threonyl-[pyruvate, phosphate dikinase] + ADP = N(tele)-phospho-L-histidyl/O-phospho-L-threonyl-[pyruvate, phosphate dikinase] + AMP + H(+). The enzyme catalyses N(tele)-phospho-L-histidyl/O-phospho-L-threonyl-[pyruvate, phosphate dikinase] + phosphate + H(+) = N(tele)-phospho-L-histidyl/L-threonyl-[pyruvate, phosphate dikinase] + diphosphate. Its function is as follows. Bifunctional serine/threonine kinase and phosphorylase involved in the regulation of the pyruvate, phosphate dikinase (PPDK) by catalyzing its phosphorylation/dephosphorylation. In Lysinibacillus sphaericus (strain C3-41), this protein is Putative pyruvate, phosphate dikinase regulatory protein.